Consider the following 292-residue polypeptide: tRNA-cytidine(32) 2-sulfurtransferase (292 aa).

The PP-loop motif signature appears at 53 to 58 (SGGKDS). 3 residues coordinate [4Fe-4S] cluster: Cys-128, Cys-131, and Cys-219.

Belongs to the TtcA family. As to quaternary structure, homodimer. Mg(2+) is required as a cofactor. [4Fe-4S] cluster serves as cofactor.

It is found in the cytoplasm. It carries out the reaction cytidine(32) in tRNA + S-sulfanyl-L-cysteinyl-[cysteine desulfurase] + AH2 + ATP = 2-thiocytidine(32) in tRNA + L-cysteinyl-[cysteine desulfurase] + A + AMP + diphosphate + H(+). It participates in tRNA modification. Its function is as follows. Catalyzes the ATP-dependent 2-thiolation of cytidine in position 32 of tRNA, to form 2-thiocytidine (s(2)C32). The sulfur atoms are provided by the cysteine/cysteine desulfurase (IscS) system. The chain is tRNA-cytidine(32) 2-sulfurtransferase from Cereibacter sphaeroides (strain ATCC 17023 / DSM 158 / JCM 6121 / CCUG 31486 / LMG 2827 / NBRC 12203 / NCIMB 8253 / ATH 2.4.1.) (Rhodobacter sphaeroides).